Consider the following 502-residue polypeptide: Cytochrome P450 monooxygenase orf6 (502 aa).

A helical membrane pass occupies residues 3-25 (ALWVLAVALVAYFLCLSIYRLFL). Asn382 is a glycosylation site (N-linked (GlcNAc...) asparagine). Cys445 lines the heme pocket.

It belongs to the cytochrome P450 family. Requires heme as cofactor.

The protein localises to the membrane. It participates in mycotoxin biosynthesis. In terms of biological role, cytochrome P450 monooxygenase; part of the gene cluster that mediates the biosynthesis of brefeldin A (BFA), a protein transport inhibitor that shows antiviral, antifungal, and antitumor properties. The proposed biosynthesis of BFA involves formation of an acyclic polyketide chain that is differentially tailored throughout the backbone. The highly reducing polyketide synthase Bref-PKS is proposed to synthesize the precisely reduced octaketide precursor, which could then be directly offloaded by the thiohydrolase enzyme Bref-TH followed by a cytochrome P450 monooxygenase-mediated formation of the cyclopentane ring and macrocyclization to afford 7-deoxy BFA. Alternatively, the first ring annulation can also occur on the ACP-tethered intermediate before the thiohydrolase release and lactonization. The C7-hydroxylation by another cytochrome P450 monooxygenase is believed to be the final step in the process to obtain the final structure of BFA. In addition to the HRPKS Bref-PKS and the thiohydrolase Bref-TH, the brefeldin A biosynthesis cluster contains 4 cytochrome p450 monooxygenases (called orf3 to orf6), as well a the probable cluster-specific transcription regulator orf8. In Eupenicillium brefeldianum (Penicillium brefeldianum), this protein is Cytochrome P450 monooxygenase orf6.